The following is a 143-amino-acid chain: Transcription antitermination protein NusB (143 aa).

It belongs to the NusB family.

Functionally, involved in transcription antitermination. Required for transcription of ribosomal RNA (rRNA) genes. Binds specifically to the boxA antiterminator sequence of the ribosomal RNA (rrn) operons. The protein is Transcription antitermination protein NusB of Dehalococcoides mccartyi (strain ATCC BAA-2266 / KCTC 15142 / 195) (Dehalococcoides ethenogenes (strain 195)).